We begin with the raw amino-acid sequence, 164 residues long: Arginine repressor (164 aa).

The protein belongs to the ArgR family.

The protein resides in the cytoplasm. It participates in amino-acid biosynthesis; L-arginine biosynthesis [regulation]. Its function is as follows. Regulates arginine biosynthesis genes. The polypeptide is Arginine repressor (Mycolicibacterium paratuberculosis (strain ATCC BAA-968 / K-10) (Mycobacterium paratuberculosis)).